A 363-amino-acid polypeptide reads, in one-letter code: Ribosome-binding ATPase YchF (363 aa).

One can recognise an OBG-type G domain in the interval Phe3 to Lys257. Asn12–Thr17 is a binding site for ATP. 2 residues coordinate Mg(2+): Ser16 and Thr36. One can recognise a TGS domain in the interval Asn278–Tyr361.

This sequence belongs to the TRAFAC class OBG-HflX-like GTPase superfamily. OBG GTPase family. YchF/OLA1 subfamily. Mg(2+) is required as a cofactor.

Functionally, ATPase that binds to both the 70S ribosome and the 50S ribosomal subunit in a nucleotide-independent manner. This chain is Ribosome-binding ATPase YchF, found in Buchnera aphidicola subsp. Baizongia pistaciae (strain Bp).